Reading from the N-terminus, the 90-residue chain is MKTAIFTVVLALAVFAVLSFGWEANEEALSEEFTELIHEKEAASETEARECRYFWGECHDHMPCCDWLVCRYKWPITYNICVWNRTFPEK.

The first 19 residues, 1–19, serve as a signal peptide directing secretion; it reads MKTAIFTVVLALAVFAVLS. Positions 20–50 are excised as a propeptide; that stretch reads FGWEANEEALSEEFTELIHEKEAASETEARE. 3 cysteine pairs are disulfide-bonded: Cys-51–Cys-65, Cys-58–Cys-70, and Cys-64–Cys-81.

This sequence belongs to the neurotoxin 10 (Hwtx-1) family. 13 (Hntx-13) subfamily. In terms of tissue distribution, expressed by the venom gland.

The protein localises to the secreted. In terms of biological role, ion channel inhibitor. The protein is U7-theraphotoxin-Hhn1a 4 of Cyriopagopus hainanus (Chinese bird spider).